We begin with the raw amino-acid sequence, 164 residues long: Putative L,D-transpeptidase YkuD (164 aa).

Residues 2-45 (LTYQVKQGDTLNSIAADFRISTAALLQANPSLQAGLTAGQSIVI) form the LysM domain. In terms of domain architecture, L,D-TPase catalytic spans 56 to 163 (YHIAVSIGAK…VPNGTRVTIN (108 aa)). Residue His-123 is the Proton donor/acceptor of the active site. Cys-139 acts as the Nucleophile in catalysis.

It belongs to the YkuD family. In terms of assembly, monomer.

The protein resides in the spore wall. Its pathway is cell wall biogenesis; peptidoglycan biosynthesis. Functionally, probable enzyme that may play an important role in cell wall biology. The polypeptide is Putative L,D-transpeptidase YkuD (ykuD) (Bacillus subtilis (strain 168)).